A 274-amino-acid polypeptide reads, in one-letter code: 16S rRNA (guanine(1405)-N(7))-methyltransferase (274 aa).

Residues Phe64, 102-104 (HMS), Arg108, Ala133, Asp156, 182-183 (DL), Leu198, and Gln207 contribute to the S-adenosyl-L-methionine site.

Belongs to the methyltransferase superfamily. Aminoglycoside resistance family.

It catalyses the reaction guanosine(1405) in 16S rRNA + S-adenosyl-L-methionine = N(7)-methylguanosine(1405) in 16S rRNA + S-adenosyl-L-homocysteine. Its function is as follows. Specifically methylates the N(7) position of guanine 1405 in 16S rRNA. Confers resistance to aminoglycosides. The sequence is that of 16S rRNA (guanine(1405)-N(7))-methyltransferase (grm) from Micromonospora rosea.